We begin with the raw amino-acid sequence, 141 residues long: uncharacterized protein (141 aa).

Residues 10 to 117 (IFCDIVQGSI…VPKYETGKGF (108 aa)) enclose the HIT domain. Residues 102–106 (HFHLH) carry the Histidine triad motif motif.

This is an uncharacterized protein from Mycoplasma genitalium (strain ATCC 33530 / DSM 19775 / NCTC 10195 / G37) (Mycoplasmoides genitalium).